The chain runs to 88 residues: Sec-independent protein translocase protein TatA (88 aa).

A helical membrane pass occupies residues 1 to 21; sequence MGGISITQLLIIASIVVVLFG. A disordered region spans residues 39-88; it reads FKKSMSEDDNTTSTSSDKSSQDADFTAPPIEPKANLACPDEAKNKDKEHV. A compositionally biased stretch (low complexity) spans 49–62; sequence TTSTSSDKSSQDAD. Residues 78–88 show a composition bias toward basic and acidic residues; it reads DEAKNKDKEHV.

Belongs to the TatA/E family. In terms of assembly, the Tat system comprises two distinct complexes: a TatABC complex, containing multiple copies of TatA, TatB and TatC subunits, and a separate TatA complex, containing only TatA subunits. Substrates initially bind to the TatABC complex, which probably triggers association of the separate TatA complex to form the active translocon.

The protein resides in the cell inner membrane. In terms of biological role, part of the twin-arginine translocation (Tat) system that transports large folded proteins containing a characteristic twin-arginine motif in their signal peptide across membranes. TatA could form the protein-conducting channel of the Tat system. In Sodalis glossinidius (strain morsitans), this protein is Sec-independent protein translocase protein TatA.